A 162-amino-acid polypeptide reads, in one-letter code: UPF0763 protein Sdel_0383 (162 aa).

This sequence belongs to the UPF0763 family.

The sequence is that of UPF0763 protein Sdel_0383 from Sulfurospirillum deleyianum (strain ATCC 51133 / DSM 6946 / 5175).